The sequence spans 129 residues: Lysozyme C (129 aa).

The C-type lysozyme domain maps to lysine 1–leucine 129. Cystine bridges form between cysteine 6/cysteine 127, cysteine 30/cysteine 115, cysteine 64/cysteine 80, and cysteine 76/cysteine 94. Catalysis depends on residues glutamate 35 and aspartate 52.

The protein belongs to the glycosyl hydrolase 22 family. In terms of assembly, monomer.

The protein localises to the secreted. It carries out the reaction Hydrolysis of (1-&gt;4)-beta-linkages between N-acetylmuramic acid and N-acetyl-D-glucosamine residues in a peptidoglycan and between N-acetyl-D-glucosamine residues in chitodextrins.. Functionally, lysozymes have primarily a bacteriolytic function; those in tissues and body fluids are associated with the monocyte-macrophage system and enhance the activity of immunoagents. This Tragopan satyra (Satyr tragopan) protein is Lysozyme C (LYZ).